A 524-amino-acid chain; its full sequence is Decreased expression in renal and prostate cancer protein (524 aa).

Residues 1–12 (MKEPRIFPRERP) are compositionally biased toward basic and acidic residues. Disordered regions lie at residues 1–43 (MKEP…TGHP) and 64–252 (PFPR…LDAR). Residues 129 to 148 (LNPRTGALPGPGPLSNPRLG) show a composition bias toward low complexity. Residues 163 to 181 (GLLGAGPDPRGGGPMGPGS) are compositionally biased toward gly residues. The residue at position 302 (serine 302) is a Phosphoserine. Low complexity predominate over residues 312–323 (PMGPNSGPSSRG). A disordered region spans residues 312–332 (PMGPNSGPSSRGIGLPGPNPS). Arginine 364 carries the asymmetric dimethylarginine modification. Arginine 387 bears the Omega-N-methylarginine mark. At serine 423 the chain carries Phosphoserine.

It belongs to the DERPC family. In terms of tissue distribution, ubiquitously expressed, with abundant expression in kidney, skeletal muscle, testis, liver, ovary, and heart and moderate expression in prostate. Expression is significantly reduced in renal and prostate tumors. No differential expression in breast cancer cells, between lobular carcinoma and normal lobules.

The protein localises to the nucleus. In terms of biological role, potential tumor suppressor. Inhibits prostate tumor cell growth, when overexpressed. The polypeptide is Decreased expression in renal and prostate cancer protein (Homo sapiens (Human)).